Here is a 324-residue protein sequence, read N- to C-terminus: uncharacterized protein (324 aa).

The segment covering 1–11 has biased composition (polar residues); it reads MNTNINVNGSN. Disordered regions lie at residues 1-77, 132-194, and 272-324; these read MNTN…YSYS, NNHY…NNNN, and DENI…DNDS. The span at 21–64 shows a compositional bias: low complexity; it reads NENNNNNNGRNNNTNNNNNGRYNNNNNNNNNNNNNNYNLNMNST. Low complexity predominate over residues 279–324; it reads SNNNNNNNNNNNNSYNVNICRNNSNFNVNENNGGDNNNDNNNDNDS.

This is an uncharacterized protein from Dictyostelium discoideum (Social amoeba).